The following is a 500-amino-acid chain: Maturase K (500 aa).

Belongs to the intron maturase 2 family. MatK subfamily.

It is found in the plastid. It localises to the chloroplast. Functionally, usually encoded in the trnK tRNA gene intron. Probably assists in splicing its own and other chloroplast group II introns. The chain is Maturase K from Prunus laurocerasus (Cherry laurel).